Reading from the N-terminus, the 678-residue chain is UvrABC system protein C (678 aa).

Residues 1-13 (MKKNISYGKHKTF) are compositionally biased toward basic residues. Residues 1 to 25 (MKKNISYGKHKTFPSKLNGLEKQHS) are disordered. The GIY-YIG domain occupies 69–147 (HKPGVYRMFD…IKRLHPRFNV (79 aa)). Residues 257–292 (QSVKNDMIQAMHKAAEDLDFEQAAVYRDRLSALSHI) enclose the UVR domain.

The protein belongs to the UvrC family. As to quaternary structure, interacts with UvrB in an incision complex.

The protein resides in the cytoplasm. Functionally, the UvrABC repair system catalyzes the recognition and processing of DNA lesions. UvrC both incises the 5' and 3' sides of the lesion. The N-terminal half is responsible for the 3' incision and the C-terminal half is responsible for the 5' incision. In Bartonella quintana (strain Toulouse) (Rochalimaea quintana), this protein is UvrABC system protein C.